An 80-amino-acid polypeptide reads, in one-letter code: Cytochrome c oxidase subunit 7B, mitochondrial (80 aa).

A mitochondrion-targeting transit peptide spans 1-24 (MFPLVKNALNRLQVRSIQQTMARQ). The Mitochondrial matrix segment spans residues 25 to 32 (SHQKRTPD). Residues 33-59 (FHDKYGNAVLASGATFCIVTWTYVATQ) traverse the membrane as a helical segment. Topologically, residues 60–80 (VGIEWNLSPVGRVTPKEWRNQ) are mitochondrial intermembrane.

Belongs to the cytochrome c oxidase VIIb family. Component of the cytochrome c oxidase (complex IV, CIV), a multisubunit enzyme composed of 14 subunits. The complex is composed of a catalytic core of 3 subunits MT-CO1, MT-CO2 and MT-CO3, encoded in the mitochondrial DNA, and 11 supernumerary subunits COX4I, COX5A, COX5B, COX6A, COX6B, COX6C, COX7A, COX7B, COX7C, COX8 and NDUFA4, which are encoded in the nuclear genome. The complex exists as a monomer or a dimer and forms supercomplexes (SCs) in the inner mitochondrial membrane with NADH-ubiquinone oxidoreductase (complex I, CI) and ubiquinol-cytochrome c oxidoreductase (cytochrome b-c1 complex, complex III, CIII), resulting in different assemblies (supercomplex SCI(1)III(2)IV(1) and megacomplex MCI(2)III(2)IV(2)).

The protein localises to the mitochondrion inner membrane. The protein operates within energy metabolism; oxidative phosphorylation. Component of the cytochrome c oxidase, the last enzyme in the mitochondrial electron transport chain which drives oxidative phosphorylation. The respiratory chain contains 3 multisubunit complexes succinate dehydrogenase (complex II, CII), ubiquinol-cytochrome c oxidoreductase (cytochrome b-c1 complex, complex III, CIII) and cytochrome c oxidase (complex IV, CIV), that cooperate to transfer electrons derived from NADH and succinate to molecular oxygen, creating an electrochemical gradient over the inner membrane that drives transmembrane transport and the ATP synthase. Cytochrome c oxidase is the component of the respiratory chain that catalyzes the reduction of oxygen to water. Electrons originating from reduced cytochrome c in the intermembrane space (IMS) are transferred via the dinuclear copper A center (CU(A)) of subunit 2 and heme A of subunit 1 to the active site in subunit 1, a binuclear center (BNC) formed by heme A3 and copper B (CU(B)). The BNC reduces molecular oxygen to 2 water molecules using 4 electrons from cytochrome c in the IMS and 4 protons from the mitochondrial matrix. Plays a role in proper central nervous system (CNS) development in vertebrates. This is Cytochrome c oxidase subunit 7B, mitochondrial (COX7B) from Pongo abelii (Sumatran orangutan).